The chain runs to 289 residues: Mitochondrial fission regulator 1-like (289 aa).

Phosphothreonine is present on Thr27. Ser38 carries the post-translational modification Phosphoserine. Position 100 is a phosphoserine; by AMPK (Ser100). Residues Ser107, Ser221, and Ser222 each carry the phosphoserine modification. Ser235 carries the post-translational modification Phosphoserine; by AMPK. 2 positions are modified to phosphoserine: Ser258 and Ser270.

The protein belongs to the MTFR1 family. Phosphorylated by AMPK. Upon stress, phosphorylation at Ser-100 and Ser-235 by AMPK is sufficient to induce mitochondrial fragmentation.

It is found in the mitochondrion outer membrane. Functionally, mitochondrial protein required for adaptation of miochondrial dynamics to metabolic changes. Regulates mitochondrial morphology at steady state and mediates AMPK-dependent stress-induced mitochondrial fragmentation via the control of OPA1 levels. The polypeptide is Mitochondrial fission regulator 1-like (Mtfr1l) (Mus musculus (Mouse)).